A 241-amino-acid chain; its full sequence is Fatty acid metabolism regulator protein (241 aa).

Residues 11 to 79 (QSPAGLAEEY…HGKPTKVNNI (69 aa)) enclose the HTH gntR-type domain. The segment at residues 39-58 (ERELAEKIGVTRTTLREVLQ) is a DNA-binding region (H-T-H motif).

As to quaternary structure, homodimer.

Its subcellular location is the cytoplasm. In terms of biological role, multifunctional regulator of fatty acid metabolism. In Pasteurella multocida (strain Pm70), this protein is Fatty acid metabolism regulator protein.